Reading from the N-terminus, the 476-residue chain is Ribulose bisphosphate carboxylase large chain (476 aa).

Positions 116 and 166 each coordinate substrate. Lys168 acts as the Proton acceptor in catalysis. Lys170 provides a ligand contact to substrate. Residues Lys194, Asp196, and Glu197 each coordinate Mg(2+). Position 194 is an N6-carboxylysine (Lys194). The active-site Proton acceptor is the His286. Positions 287, 319, and 371 each coordinate substrate.

The protein belongs to the RuBisCO large chain family. Type I subfamily. In terms of assembly, heterohexadecamer of 8 large chains and 8 small chains. Requires Mg(2+) as cofactor.

It carries out the reaction 2 (2R)-3-phosphoglycerate + 2 H(+) = D-ribulose 1,5-bisphosphate + CO2 + H2O. The catalysed reaction is D-ribulose 1,5-bisphosphate + O2 = 2-phosphoglycolate + (2R)-3-phosphoglycerate + 2 H(+). RuBisCO catalyzes two reactions: the carboxylation of D-ribulose 1,5-bisphosphate, the primary event in carbon dioxide fixation, as well as the oxidative fragmentation of the pentose substrate. Both reactions occur simultaneously and in competition at the same active site. This is Ribulose bisphosphate carboxylase large chain from Pseudonocardia dioxanivorans (strain ATCC 55486 / DSM 44775 / JCM 13855 / CB1190).